Here is a 122-residue protein sequence, read N- to C-terminus: Large ribosomal subunit protein bL19c (122 aa).

The protein belongs to the bacterial ribosomal protein bL19 family.

Its subcellular location is the plastid. It localises to the chloroplast. In Gracilaria tenuistipitata var. liui (Red alga), this protein is Large ribosomal subunit protein bL19c.